The chain runs to 119 residues: Large ribosomal subunit protein bL20c (119 aa).

It belongs to the bacterial ribosomal protein bL20 family.

It is found in the plastid. The protein localises to the chloroplast. Binds directly to 23S ribosomal RNA and is necessary for the in vitro assembly process of the 50S ribosomal subunit. It is not involved in the protein synthesizing functions of that subunit. This chain is Large ribosomal subunit protein bL20c (rpl20), found in Zea mays (Maize).